The following is a 312-amino-acid chain: Ribosomal RNA small subunit methyltransferase H (312 aa).

S-adenosyl-L-methionine-binding positions include 30 to 32, Asp50, Phe80, Asp98, and Gln105; that span reads GGH.

The protein belongs to the methyltransferase superfamily. RsmH family.

Its subcellular location is the cytoplasm. The enzyme catalyses cytidine(1402) in 16S rRNA + S-adenosyl-L-methionine = N(4)-methylcytidine(1402) in 16S rRNA + S-adenosyl-L-homocysteine + H(+). Functionally, specifically methylates the N4 position of cytidine in position 1402 (C1402) of 16S rRNA. The protein is Ribosomal RNA small subunit methyltransferase H of Lawsonia intracellularis (strain PHE/MN1-00).